We begin with the raw amino-acid sequence, 553 residues long: Dihydroxy-acid dehydratase (553 aa).

D78 provides a ligand contact to Mg(2+). Position 119 (C119) interacts with [2Fe-2S] cluster. The Mg(2+) site is built by D120 and K121. N6-carboxylysine is present on K121. C191 provides a ligand contact to [2Fe-2S] cluster. E444 is a binding site for Mg(2+). Catalysis depends on S470, which acts as the Proton acceptor.

The protein belongs to the IlvD/Edd family. Homodimer. Requires [2Fe-2S] cluster as cofactor. Mg(2+) is required as a cofactor.

The catalysed reaction is (2R)-2,3-dihydroxy-3-methylbutanoate = 3-methyl-2-oxobutanoate + H2O. The enzyme catalyses (2R,3R)-2,3-dihydroxy-3-methylpentanoate = (S)-3-methyl-2-oxopentanoate + H2O. Its pathway is amino-acid biosynthesis; L-isoleucine biosynthesis; L-isoleucine from 2-oxobutanoate: step 3/4. It functions in the pathway amino-acid biosynthesis; L-valine biosynthesis; L-valine from pyruvate: step 3/4. In terms of biological role, functions in the biosynthesis of branched-chain amino acids. Catalyzes the dehydration of (2R,3R)-2,3-dihydroxy-3-methylpentanoate (2,3-dihydroxy-3-methylvalerate) into 2-oxo-3-methylpentanoate (2-oxo-3-methylvalerate) and of (2R)-2,3-dihydroxy-3-methylbutanoate (2,3-dihydroxyisovalerate) into 2-oxo-3-methylbutanoate (2-oxoisovalerate), the penultimate precursor to L-isoleucine and L-valine, respectively. In Methanosarcina barkeri (strain Fusaro / DSM 804), this protein is Dihydroxy-acid dehydratase.